Reading from the N-terminus, the 554-residue chain is Valerianol synthase TPS1B (554 aa).

Residues D307 and D311 each contribute to the Mg(2+) site. The DDXXD motif signature appears at 326–330; it reads VQRWD. Mg(2+) is bound by residues D452, S456, and E460.

The protein belongs to the terpene synthase family. It depends on Mg(2+) as a cofactor.

It catalyses the reaction (2E,6E)-farnesyl diphosphate + H2O = valerianol + diphosphate. It participates in secondary metabolite biosynthesis; terpenoid biosynthesis. Its function is as follows. Terpene synthase that catalyzes the biosynthesis of the terpene valerianol, which is a volatile compound of floral scent. The polypeptide is Valerianol synthase TPS1B (Camellia hiemalis (Camellia)).